Here is a 443-residue protein sequence, read N- to C-terminus: Citrate transporter CitP (443 aa).

13 helical membrane passes run 27–47 (ISGI…IAIS), 59–79 (IFAL…LPIF), 83–103 (LGGG…TNVM), 114–134 (FING…SSLF), 151–171 (VAFI…VIIG), 177–197 (AILY…IVPL), 209–229 (SAGI…LAII), 268–288 (YVQL…GTML), 294–314 (GINA…FGLL), 322–342 (VIMF…AGVG), 350–370 (VLLA…IVAI), 388–410 (AAIT…VLAA), and 422–442 (MGNR…VTFM).

Belongs to the 2-hydroxycarboxylate transporter (2-HCT) (TC 2.A.24) family.

The protein resides in the cell membrane. It catalyses the reaction (R)-lactate(in) + citrate(out) = (R)-lactate(out) + citrate(in). The enzyme catalyses (S)-lactate(in) + citrate(out) = (S)-lactate(out) + citrate(in). It carries out the reaction citrate(in) + H(+)(in) = citrate(out) + H(+)(out). Uptake of citrate is not affected by the absence or presence of Na(+) up to 25 mM and is increasingly inhibited by increasing Mg(2+) concentrations. Secondary transporter involved in citrate metabolism. During cometabolism of citrate and glucose, catalyzes the uptake of divalent citrate into the cell coupled to the exit of monovalent lactate, a product of citrate fermentation during citrate-glucose cometabolism (precursor/product exchange). The citrate/lactate exchange is electrogenic and results in the generation of a membrane potential. In the absence of glucose, i.e. when no lactate is produced, CitP catalyzes the proton-dependent transport of citrate and malate. Transports the divalent form of citrate and malate with the concomitant uptake of one proton, therefore translocating a single unit of negative charge across the membrane. In vitro, transports a range of substrates that contain the 2-hydroxycarboxylate motif, HO-CR(2)-COO(-), with a preference for malate, citrate and monovalent 2-hydroxyisobutyrate. Modification of the OH or the COO(-) groups of the 2-hydroxycarboxylate motif drastically reduces the affinity of the transporter for the substrates, indicating their relevance in substrate recognition. Significant activity is also observed with some 2-oxocarboxylates and a 3-hydroxycarboxylate. The chain is Citrate transporter CitP from Leuconostoc mesenteroides subsp. mesenteroides.